Here is a 1174-residue protein sequence, read N- to C-terminus: RecBCD enzyme subunit RecB (1174 aa).

Residues 1–852 (MKIDSLKEKL…GGKTMNYEGL (852 aa)) form a DNA-binding and helicase activity, interacts with RecC region. In terms of domain architecture, UvrD-like helicase ATP-binding spans 4–449 (DSLKEKLNIF…YYLDTNWRSS (446 aa)). Position 25 to 32 (25 to 32 (ASAGTGKT)) interacts with ATP. A UvrD-like helicase C-terminal domain is found at 479 to 745 (PSSKNLKMNF…KIITIHKSKG (267 aa)). Residues 900 to 1174 (TWSITSFSQL…LIKKTMTLIS (275 aa)) are nuclease activity, interacts with RecD and RecA. Positions 957, 1068, and 1081 each coordinate Mg(2+). Residue Asp1081 is the For nuclease activity of the active site.

The protein belongs to the helicase family. UvrD subfamily. As to quaternary structure, heterotrimer of RecB, RecC and RecD. All subunits contribute to DNA-binding. Interacts with RecA. Mg(2+) is required as a cofactor.

The catalysed reaction is Exonucleolytic cleavage (in the presence of ATP) in either 5'- to 3'- or 3'- to 5'-direction to yield 5'-phosphooligonucleotides.. It catalyses the reaction Couples ATP hydrolysis with the unwinding of duplex DNA by translocating in the 3'-5' direction.. It carries out the reaction ATP + H2O = ADP + phosphate + H(+). In terms of biological role, a helicase/nuclease that prepares dsDNA breaks (DSB) for recombinational DNA repair. Binds to DSBs and unwinds DNA via a highly rapid and processive ATP-dependent bidirectional helicase activity. Unwinds dsDNA until it encounters a Chi (crossover hotspot instigator) sequence from the 3' direction. Cuts ssDNA a few nucleotides 3' to the Chi site. The properties and activities of the enzyme are changed at Chi. The Chi-altered holoenzyme produces a long 3'-ssDNA overhang and facilitates RecA-binding to the ssDNA for homologous DNA recombination and repair. Holoenzyme degrades any linearized DNA that is unable to undergo homologous recombination. In the holoenzyme this subunit contributes ATPase, 3'-5' helicase, exonuclease activity and loads RecA onto ssDNA. The chain is RecBCD enzyme subunit RecB from Buchnera aphidicola subsp. Acyrthosiphon pisum (strain APS) (Acyrthosiphon pisum symbiotic bacterium).